Consider the following 721-residue polypeptide: Polyribonucleotide nucleotidyltransferase (721 aa).

Residues aspartate 495 and aspartate 501 each coordinate Mg(2+). Residues 562–621 (PRLLSFRIDPELIGTVIGPGGRTIKGITERTNTKIDIEDSGIVTIASHDGAAADEAQKII) enclose the KH domain. Positions 631–699 (GEVFSGAITR…NRGRINLTLR (69 aa)) constitute an S1 motif domain. A disordered region spans residues 700 to 721 (GVPQNGEEAEPAPAPTPVAPLN). Positions 711-721 (APAPTPVAPLN) are enriched in pro residues.

This sequence belongs to the polyribonucleotide nucleotidyltransferase family. The cofactor is Mg(2+).

It localises to the cytoplasm. The catalysed reaction is RNA(n+1) + phosphate = RNA(n) + a ribonucleoside 5'-diphosphate. Its function is as follows. Involved in mRNA degradation. Catalyzes the phosphorolysis of single-stranded polyribonucleotides processively in the 3'- to 5'-direction. This Synechococcus sp. (strain WH7803) protein is Polyribonucleotide nucleotidyltransferase.